Consider the following 202-residue polypeptide: Glycerol-3-phosphate acyltransferase (202 aa).

A run of 4 helical transmembrane segments spans residues 2 to 22 (ANLLFALAAYLIGSVSFAVVV), 80 to 100 (LNETGLAMVALAVFLGHLFPV), 119 to 139 (AIDPILGLGTLATWLIIAFFF), and 158 to 178 (VLMNGVDVMTGAIFVISVLLI).

Belongs to the PlsY family. In terms of assembly, probably interacts with PlsX.

Its subcellular location is the cell inner membrane. The enzyme catalyses an acyl phosphate + sn-glycerol 3-phosphate = a 1-acyl-sn-glycero-3-phosphate + phosphate. It functions in the pathway lipid metabolism; phospholipid metabolism. In terms of biological role, catalyzes the transfer of an acyl group from acyl-phosphate (acyl-PO(4)) to glycerol-3-phosphate (G3P) to form lysophosphatidic acid (LPA). This enzyme utilizes acyl-phosphate as fatty acyl donor, but not acyl-CoA or acyl-ACP. The polypeptide is Glycerol-3-phosphate acyltransferase (Cupriavidus necator (strain ATCC 17699 / DSM 428 / KCTC 22496 / NCIMB 10442 / H16 / Stanier 337) (Ralstonia eutropha)).